Consider the following 210-residue polypeptide: 3-hexulose-6-phosphate synthase (210 aa).

Belongs to the HPS/KGPDC family. HPS subfamily.

The enzyme catalyses D-ribulose 5-phosphate + formaldehyde = D-arabino-hex-3-ulose 6-phosphate. It participates in one-carbon metabolism; formaldehyde assimilation via RuMP pathway; D-fructose 6-phosphate from D-ribulose 5-phosphate and formaldehyde: step 1/2. Its function is as follows. Catalyzes the condensation of ribulose 5-phosphate with formaldehyde to form 3-hexulose 6-phosphate. This chain is 3-hexulose-6-phosphate synthase, found in Staphylococcus aureus (strain bovine RF122 / ET3-1).